The sequence spans 99 residues: UPF0473 protein Athe_1150 (99 aa).

It belongs to the UPF0473 family.

The protein is UPF0473 protein Athe_1150 of Caldicellulosiruptor bescii (strain ATCC BAA-1888 / DSM 6725 / KCTC 15123 / Z-1320) (Anaerocellum thermophilum).